Here is a 1075-residue protein sequence, read N- to C-terminus: DNA-directed RNA polymerase subunit beta (1075 aa).

This sequence belongs to the RNA polymerase beta chain family. In terms of assembly, in plastids the minimal PEP RNA polymerase catalytic core is composed of four subunits: alpha, beta, beta', and beta''. When a (nuclear-encoded) sigma factor is associated with the core the holoenzyme is formed, which can initiate transcription.

The protein localises to the plastid. The protein resides in the chloroplast. The catalysed reaction is RNA(n) + a ribonucleoside 5'-triphosphate = RNA(n+1) + diphosphate. In terms of biological role, DNA-dependent RNA polymerase catalyzes the transcription of DNA into RNA using the four ribonucleoside triphosphates as substrates. The sequence is that of DNA-directed RNA polymerase subunit beta from Zea mays (Maize).